The following is a 683-amino-acid chain: THO complex subunit 5 homolog (683 aa).

The interval 1 to 42 is disordered; that stretch reads MSSESSKKRKPKVIRSDGTPTEGKRNRSDTEQEGKYYSEEAE. S2 is subject to N-acetylserine. The interval 2–144 is interaction with CSF1R; sequence SSESSKKRKP…YEVMHLQKEI (143 aa). An interaction with THOC7 region spans residues 2–199; sequence SSESSKKRKP…RLDWELEQRK (198 aa). Residues S5 and S6 each carry the phosphoserine modification. The short motif at 7 to 10 is the Nuclear localization signal element; that stretch reads KKRK. Basic and acidic residues predominate over residues 22 to 42; sequence EGKRNRSDTEQEGKYYSEEAE. Residues 81–247 adopt a coiled-coil conformation; sequence AIEIEERRIQ…QASLPVQEYL (167 aa). Residue K153 forms a Glycyl lysine isopeptide (Lys-Gly) (interchain with G-Cter in SUMO2) linkage. Residue Y225 is modified to Phosphotyrosine. The interval 247 to 683 is tandem RWD domains; it reads LFMPFDQAHK…NHPQGFFSHR (437 aa). The tract at residues 301-336 is disordered; sequence FKPPEDSQDDESDSDAEEEQTTKRRRPTLGVQLDDK. Positions 306 to 319 are enriched in acidic residues; that stretch reads DSQDDESDSDAEEE. A phosphoserine mark is found at S307, S312, and S314. A Phosphothreonine modification is found at T328.

The protein belongs to the THOC5 family. As to quaternary structure, component of the THO subcomplex, which is composed of THOC1, THOC2, THOC3, THOC5, THOC6 and THOC7. The THO subcomplex interacts with DDX39B to form the THO-DDX39B complex which multimerizes into a 28-subunit tetrameric assembly. Component of the transcription/export (TREX) complex at least composed of ALYREF/THOC4, DDX39B, SARNP/CIP29, CHTOP and the THO subcomplex; in the complex interacts with THOC1, THOC2, THOC5, THOC6 and THOC7; forms a coiled-coil dimer with THOC7; together with THOC6 and THOC7, plays a key structural role in the oligomerization of the THO-DDX39B complex. TREX seems to have a dynamic structure involving ATP-dependent remodeling. Interacts (via N-terminus) with the NTF2 domain of NXF1. Interacts with phosphorylated CSF1R. Forms a complex with CEBPB. Interacts with CPSF6; indicative for an association with the cleavage factor Im (CFIm) complex. Interacts with THOC1. Interacts with LUZP4. Interacts with NCBP3. Post-translationally, phosphorylated on tyrosine upon binding to activated CSF1R; which causes a dissociation of the two proteins. Phosphorylation on Ser-5 and/or Ser-6 is required for nuclear export. Phosphorylated on Thr-328 in insulin-stimulated adipocytes. In terms of tissue distribution, ubiquitously expressed, with highest levels in testis, liver and heart.

The protein resides in the nucleus. Its subcellular location is the cytoplasm. Functionally, component of the THO subcomplex of the TREX complex which is thought to couple mRNA transcription, processing and nuclear export, and which specifically associates with spliced mRNA and not with unspliced pre-mRNA. Plays a key structural role in the oligomerization of the THO-DDX39B complex. TREX is recruited to spliced mRNAs by a transcription-independent mechanism, binds to mRNA upstream of the exon-junction complex (EJC) and is recruited in a splicing- and cap-dependent manner to a region near the 5' end of the mRNA where it functions in mRNA export to the cytoplasm via the TAP/NXF1 pathway. THOC5 in conjunction with ALYREF/THOC4 functions in NXF1-NXT1 mediated nuclear export of HSP70 mRNA; both proteins enhance the RNA binding activity of NXF1 and are required for NXF1 localization to the nuclear rim. Involved in transcription elongation and genome stability. Involved in alternative polyadenylation site choice by recruiting CPSF6 to 5' region of target genes; probably mediates association of the TREX and CFIm complexes. Its function is as follows. Regulates the expression of myeloid transcription factors CEBPA, CEBPB and GAB2 by enhancing the levels of phosphatidylinositol 3,4,5-trisphosphate. May be involved in the differentiation of granulocytes and adipocytes. Essential for hematopoietic primitive cell survival and plays an integral role in monocytic development. The protein is THO complex subunit 5 homolog (Thoc5) of Mus musculus (Mouse).